Reading from the N-terminus, the 552-residue chain is T-box transcription factor TBX4 (552 aa).

The span at 1–14 shows a compositional bias: basic and acidic residues; the sequence is MLQDKGLSESEEAF. Residues 1–50 form a disordered region; the sequence is MLQDKGLSESEEAFRAPGPALGEASNTSTTNAPEPALATPGLSGAALSSP. A DNA-binding region (T-box) is located at residues 76 to 256; sequence LHEKELWKKF…NNPFAKGFRG (181 aa). Residue serine 514 is modified to Phosphoserine.

The protein localises to the nucleus. Its function is as follows. Transcriptional regulator that has an essential role in the organogenesis of lungs, pelvis, and hindlimbs. The polypeptide is T-box transcription factor TBX4 (Tbx4) (Mus musculus (Mouse)).